We begin with the raw amino-acid sequence, 569 residues long: Endonuclease/exonuclease/phosphatase family domain-containing protein 1 (569 aa).

Residues 1–20 form a disordered region; it reads MGSTLGCHRSIPRDPSDLSH. Gly-2 carries the N-myristoyl glycine lipid modification. Basic and acidic residues predominate over residues 11–20; it reads IPRDPSDLSH. Phosphoserine occurs at positions 16, 21, and 25. Positions 38-67 constitute a HhH domain; that stretch reads ERLNINTATEEELMTLPGVTRAVARSIVEY. Phosphoserine occurs at positions 106, 110, 160, and 173. Residues 200–224 are disordered; the sequence is SRPPSTHTNGGLTFTAKPHPSPTSL. Over residues 202–211 the composition is skewed to polar residues; it reads PPSTHTNGGL. Thr-265 is subject to Phosphothreonine. Residues 548–569 are disordered; that stretch reads EVPRNGNGVTLEPSEANVKHER.

The chain is Endonuclease/exonuclease/phosphatase family domain-containing protein 1 (Eepd1) from Rattus norvegicus (Rat).